We begin with the raw amino-acid sequence, 273 residues long: Protein ALUMINUM SENSITIVE 3 (273 aa).

The next 7 membrane-spanning stretches (helical) occupy residues 14–34, 51–71, 76–96, 107–127, 136–156, 191–213, and 228–248; these read WLIVFLKGMVKPAAALVVVLL, IYSVSRSFLQLSVIGFVLQFI, NSGWIILAYLFMVSVAGYTAG, YVAGLSILAGTSITMFLLVLL, YMIPIAGMLVGNAMTVTGVTM, ALVISLSPVLDSCKTVGLISLPG, and AIQLQIVVMNMMVGAATVSSI.

Belongs to the UPF0014 family. Expressed in roots, leaves, stems, and flowers.

The protein localises to the cell membrane. Its function is as follows. Required for aluminum (Al) resistance/tolerance, probably by translocating Al from sensitive tissues such as growing roots to tissues less sensisitive to the toxic effects of Al. This chain is Protein ALUMINUM SENSITIVE 3 (ALS3), found in Arabidopsis thaliana (Mouse-ear cress).